Reading from the N-terminus, the 1206-residue chain is Phosphoglucan, water dikinase, chloroplastic (1206 aa).

Disordered regions lie at residues 1 to 20 and 52 to 71; these read MTSLRPLETSLSIGGRPRRG and RSAASAAERTKEKKRRDSSK. Residues 1-56 constitute a chloroplast transit peptide; the sequence is MTSLRPLETSLSIGGRPRRGLVLPPPGVGAGVLLRRGAMALPGRRGFACRGRSAAS. A CBM20 domain is found at 67–168; the sequence is RDSSKQPLVH…KFDIVCHWNR (102 aa). The active-site Tele-phosphohistidine intermediate is histidine 776.

It belongs to the PEP-utilizing enzyme family. In terms of assembly, homodimer. Mg(2+) is required as a cofactor.

The protein resides in the plastid. It localises to the chloroplast. It catalyses the reaction [(1-&gt;4)-6-phospho-alpha-D-glucosyl](n) + n ATP + n H2O = [(1-&gt;4)-3,6-bisphospho-alpha-D-glucosyl](n) + n AMP + n phosphate + 2n H(+). In terms of biological role, mediates the incorporation of phosphate into starch-like phospho-alpha-glucan, mostly at the C-3 position of glucose units. May be required for starch degradation, suggesting that the phosphate content of starch regulates its degradability. This is Phosphoglucan, water dikinase, chloroplastic (GWD3) from Oryza sativa subsp. japonica (Rice).